Here is a 353-residue protein sequence, read N- to C-terminus: N6-methyladenosine RNA demethylase ALKB1 (353 aa).

The Fe2OG dioxygenase domain occupies 223 to 352 (IAQAAIVNFY…RINLNVRQMR (130 aa)). The Fe cation site is built by H241, D243, and H308. Position 343 (R343) interacts with 2-oxoglutarate.

Belongs to the alkB family. Requires Fe(2+) as cofactor.

Its subcellular location is the cytoplasm. The protein localises to the P-body. The catalysed reaction is an N(6)-methyladenosine in mRNA + 2-oxoglutarate + O2 = an adenosine in mRNA + formaldehyde + succinate + CO2. In terms of biological role, RNA demethylase that regulates the stability of mRNAs through an m(6)A-dependent manner. M6A is a modification present at internal sites of mRNAs and some non-coding RNAs and plays a role in mRNA stability and processing. Plays a role in pathogenicity towards plant host. The protein is N6-methyladenosine RNA demethylase ALKB1 of Pyricularia oryzae (strain 70-15 / ATCC MYA-4617 / FGSC 8958) (Rice blast fungus).